The chain runs to 208 residues: Interleukin-6 (208 aa).

The signal sequence occupies residues 1–27 (MTFLSTSAFSPLAFSLGLLLVVATAFP). A disulfide bridge connects residues cysteine 68 and cysteine 74. Position 77 is a phosphoserine (serine 77). Residues cysteine 97 and cysteine 107 are joined by a disulfide bond.

The protein belongs to the IL-6 superfamily. Component of a hexamer of two molecules each of IL6, IL6R and IL6ST; first binds to IL6R to associate with the signaling subunit IL6ST. Interacts with IL6R (via the N-terminal ectodomain); this interaction may be affected by IL6R-binding with SORL1, hence decreasing IL6 cis signaling. Interacts with SORL1 (via the N-terminal ectodomain); this interaction leads to IL6 internalization and lysosomal degradation. May form a trimeric complex with the soluble SORL1 ectodomain and soluble IL6R receptor; this interaction might stabilize circulating IL6, hence promoting IL6 trans signaling.

The protein localises to the secreted. Its function is as follows. Cytokine with a wide variety of biological functions in immunity, tissue regeneration, and metabolism. Binds to IL6R, then the complex associates to the signaling subunit IL6ST/gp130 to trigger the intracellular IL6-signaling pathway. The interaction with the membrane-bound IL6R and IL6ST stimulates 'classic signaling', whereas the binding of IL6 and soluble IL6R to IL6ST stimulates 'trans-signaling'. Alternatively, 'cluster signaling' occurs when membrane-bound IL6:IL6R complexes on transmitter cells activate IL6ST receptors on neighboring receiver cells. Functionally, IL6 is a potent inducer of the acute phase response. Rapid production of IL6 contributes to host defense during infection and tissue injury, but excessive IL6 synthesis is involved in disease pathology. In the innate immune response, is synthesized by myeloid cells, such as macrophages and dendritic cells, upon recognition of pathogens through toll-like receptors (TLRs) at the site of infection or tissue injury. In the adaptive immune response, is required for the differentiation of B cells into immunoglobulin-secreting cells. Plays a major role in the differentiation of CD4(+) T cell subsets. Essential factor for the development of T follicular helper (Tfh) cells that are required for the induction of germinal-center formation. Required to drive naive CD4(+) T cells to the Th17 lineage. Also required for proliferation of myeloma cells and the survival of plasmablast cells. Acts as an essential factor in bone homeostasis and on vessels directly or indirectly by induction of VEGF, resulting in increased angiogenesis activity and vascular permeability. Induces, through 'trans-signaling' and synergistically with IL1B and TNF, the production of VEGF. Involved in metabolic controls, is discharged into the bloodstream after muscle contraction increasing lipolysis and improving insulin resistance. 'Trans-signaling' in central nervous system also regulates energy and glucose homeostasis. Mediates, through GLP-1, crosstalk between insulin-sensitive tissues, intestinal L cells and pancreatic islets to adapt to changes in insulin demand. Also acts as a myokine. Plays a protective role during liver injury, being required for maintenance of tissue regeneration. Also has a pivotal role in iron metabolism by regulating HAMP/hepcidin expression upon inflammation or bacterial infection. Through activation of IL6ST-YAP-NOTCH pathway, induces inflammation-induced epithelial regeneration. This chain is Interleukin-6 (IL6), found in Felis catus (Cat).